We begin with the raw amino-acid sequence, 287 residues long: 4-hydroxybenzoate octaprenyltransferase (287 aa).

9 helical membrane passes run 21-41, 44-64, 91-111, 112-132, 139-159, 160-180, 211-231, 235-255, and 263-283; these read VGIFLLLWPTLWAVWIAAKGA, FKIAVIFIAGSVVMRAAGCIV, VTEAMLLFAVLSLIAFTLVLL, LNRLTVELAVIGILLALVYPF, LPQLWLGVAFSWSIPMAFAAT, VGHVPAVAWLLFFAAVLWPIV, LMIGLLQGSVLLTFGLLGWYL, YWFYLGLLVALGLMCYQQFLI, and CFAAFRNNNWVGFFIFLGILL.

This sequence belongs to the UbiA prenyltransferase family. Mg(2+) serves as cofactor.

Its subcellular location is the cell inner membrane. It catalyses the reaction all-trans-octaprenyl diphosphate + 4-hydroxybenzoate = 4-hydroxy-3-(all-trans-octaprenyl)benzoate + diphosphate. It functions in the pathway cofactor biosynthesis; ubiquinone biosynthesis. Its function is as follows. Catalyzes the prenylation of para-hydroxybenzoate (PHB) with an all-trans polyprenyl group. Mediates the second step in the final reaction sequence of ubiquinone-8 (UQ-8) biosynthesis, which is the condensation of the polyisoprenoid side chain with PHB, generating the first membrane-bound Q intermediate 3-octaprenyl-4-hydroxybenzoate. This chain is 4-hydroxybenzoate octaprenyltransferase, found in Coxiella burnetii (strain CbuG_Q212) (Coxiella burnetii (strain Q212)).